The following is a 294-amino-acid chain: Tryptophan 2,3-dioxygenase (294 aa).

Residues 63-67 (FIIQH), Tyr-125, and Arg-129 contribute to the substrate site. His-252 is a heme binding site. Position 266 (Thr-266) interacts with substrate.

It belongs to the tryptophan 2,3-dioxygenase family. As to quaternary structure, homotetramer. It depends on heme as a cofactor.

The enzyme catalyses L-tryptophan + O2 = N-formyl-L-kynurenine. It functions in the pathway amino-acid degradation; L-tryptophan degradation via kynurenine pathway; L-kynurenine from L-tryptophan: step 1/2. In terms of biological role, heme-dependent dioxygenase that catalyzes the oxidative cleavage of the L-tryptophan (L-Trp) pyrrole ring and converts L-tryptophan to N-formyl-L-kynurenine. Catalyzes the oxidative cleavage of the indole moiety. The chain is Tryptophan 2,3-dioxygenase from Polaromonas sp. (strain JS666 / ATCC BAA-500).